Reading from the N-terminus, the 133-residue chain is Profilin-2 (133 aa).

An intrachain disulfide couples Cys-13 to Cys-117. The Involved in PIP2 interaction motif lies at Ala-83–Thr-99. Phosphothreonine is present on Thr-113.

This sequence belongs to the profilin family. As to quaternary structure, occurs in many kinds of cells as a complex with monomeric actin in a 1:1 ratio. In terms of processing, phosphorylated by MAP kinases.

It localises to the cytoplasm. It is found in the cytoskeleton. Binds to actin and affects the structure of the cytoskeleton. At high concentrations, profilin prevents the polymerization of actin, whereas it enhances it at low concentrations. The protein is Profilin-2 of Betula pendula (European white birch).